Consider the following 709-residue polypeptide: FACT complex subunit SSRP1 (709 aa).

Ala2 is modified (N-acetylalanine). A Glycyl lysine isopeptide (Lys-Gly) (interchain with G-Cter in SUMO2) cross-link involves residue Lys90. Thr170 bears the Phosphothreonine mark. Lys233 carries the N6-acetyllysine modification. Glycyl lysine isopeptide (Lys-Gly) (interchain with G-Cter in SUMO2) cross-links involve residues Lys296 and Lys364. Lys413 is subject to N6-acetyllysine. Ser437 carries the post-translational modification Phosphoserine. Residue Tyr441 is modified to Phosphotyrosine. At Ser444 the chain carries Phosphoserine. Phosphotyrosine is present on Tyr452. Residues 458–709 are disordered; sequence EEGKIREENA…SEDSASGSDE (252 aa). The span at 470 to 496 shows a compositional bias: acidic residues; it reads SSDDSGEETDESFNPGEEEEDVAEEFD. A Phosphoserine modification is found at Ser471. Over residues 497-507 the composition is skewed to low complexity; that stretch reads SNASASSSSNE. Residue Ser510 is modified to Phosphoserine; by CK2. Residues 515–533 show a composition bias toward basic residues; it reads KKRKQLKKAKMAKDRKSRK. Basic and acidic residues-rich tracts occupy residues 534 to 546 and 577 to 624; these read KPVEVKKGKDPNA and LSKK…SSKR. N6-acetyllysine is present on Lys542. Residues 547-615 constitute a DNA-binding region (HMG box); it reads PKRPMSAYML…DYEKAMKEYE (69 aa). Basic residues predominate over residues 625 to 634; that stretch reads DKSKKKKKVK. A compositionally biased stretch (low complexity) spans 643–659; the sequence is PSRGSSSKSSSRQLSES. Phosphoserine is present on residues Ser657, Ser659, Ser667, Ser668, Ser671, Ser672, and Ser673. Residue Ser688 is modified to Phosphoserine; by CK2. A compositionally biased stretch (polar residues) spans 696–709; that stretch reads TPPSSEDSASGSDE.

The protein belongs to the SSRP1 family. In terms of assembly, interacts with MYOG (via C-terminal region). Component of the FACT complex, a stable heterodimer of SSRP1 and SUPT16H. Also a component of a CK2-SPT16-SSRP1 complex which forms following UV irradiation, composed of SSRP1, SUPT16H, CSNK2A1, CSNK2A2 and CSNK2B. Binds to histone H3-H4 tetramers, but not to intact nucleosomes. Identified in a centromere complex containing histones H2A, H2B and H4, and at least CENPA, CENPB, CENPC, CENPT, CENPN, HJURP, SUPT16H, SSRP1 and RSF1. Interacts with isoform gamma of TP63. Interacts with FYTTD1/UIF. Interacts with SRF. Interacts with NEK9. As to quaternary structure, (Microbial infection) Interacts with Herpes simplex virus 1 (HHV-1) protein ICP22; this interaction relocalizes the FACT complex to viral genomes in infected cells. Phosphorylated by CK2 following UV but not gamma irradiation. Phosphorylation inhibits its DNA-binding activity. In terms of processing, ubiquitinated. Polyubiquitinated following caspase cleavage resulting in degradation of the N-terminal ubiquitinated part of the cleaved protein. Post-translationally, sumoylated.

The protein localises to the nucleus. It localises to the nucleolus. Its subcellular location is the chromosome. Functionally, component of the FACT complex, a general chromatin factor that acts to reorganize nucleosomes. The FACT complex is involved in multiple processes that require DNA as a template such as mRNA elongation, DNA replication and DNA repair. During transcription elongation the FACT complex acts as a histone chaperone that both destabilizes and restores nucleosomal structure. It facilitates the passage of RNA polymerase II and transcription by promoting the dissociation of one histone H2A-H2B dimer from the nucleosome, then subsequently promotes the reestablishment of the nucleosome following the passage of RNA polymerase II. The FACT complex is probably also involved in phosphorylation of 'Ser-392' of p53/TP53 via its association with CK2 (casein kinase II). Binds specifically to double-stranded DNA and at low levels to DNA modified by the antitumor agent cisplatin. May potentiate cisplatin-induced cell death by blocking replication and repair of modified DNA. Also acts as a transcriptional coactivator for p63/TP63. This chain is FACT complex subunit SSRP1 (SSRP1), found in Homo sapiens (Human).